A 459-amino-acid chain; its full sequence is Argininosuccinate lyase (459 aa).

This sequence belongs to the lyase 1 family. Argininosuccinate lyase subfamily.

The protein resides in the cytoplasm. It carries out the reaction 2-(N(omega)-L-arginino)succinate = fumarate + L-arginine. It participates in amino-acid biosynthesis; L-arginine biosynthesis; L-arginine from L-ornithine and carbamoyl phosphate: step 3/3. This chain is Argininosuccinate lyase, found in Geobacillus sp. (strain WCH70).